Here is a 221-residue protein sequence, read N- to C-terminus: UPF0502 protein Sputcn32_1644 (221 aa).

Belongs to the UPF0502 family.

The chain is UPF0502 protein Sputcn32_1644 from Shewanella putrefaciens (strain CN-32 / ATCC BAA-453).